A 499-amino-acid polypeptide reads, in one-letter code: MQDQYILALDQGTTSSRAMLFDRLGNIVSTAQKEFQQIYPRPGWVEHDPQEIWSTQAGVAAEAVTRAGMNGTSIAAIGITNQRETTIVWDRETGHPIYNAIVWQDRRTADFCDQLKEQGLEEKVRAKTGLPIDSYFSATKIRWILDNVEGAREKAKQGRLAFGTVDSWLVWNFTKGGLHITDVTNASRTMLFNIHSLKWDDELLEALDIPRSMLPEVRASSETYGPTKTTVFASKIPLAGIAGDQHAALFGQMCTESGMVKNTYGTGCFLVMNTGDKPIESKNNLVTTIAWQIGDQINYALEGSIFIGGAVVQWLRDGLGIIRNAAEIETLARSVPHCDGVYLVPAFAGLGAPHWNARARGTLFGVTRGTSSAHIARAALDSIAYQSVDVLKAMEADSGIRIGELRVDGGACANNLLMQFQADILGVDAVRPKVSETTALGAAYLAGLAVGYWKDVDELQSQWKLDRRFTPALPHAEVKACLDGWKRAIRAAKAWADTP.

Threonine 13 contributes to the ADP binding site. The ATP site is built by threonine 13, threonine 14, and serine 15. Residue threonine 13 participates in sn-glycerol 3-phosphate binding. Arginine 17 contacts ADP. 4 residues coordinate sn-glycerol 3-phosphate: arginine 83, glutamate 84, tyrosine 135, and aspartate 244. Glycerol contacts are provided by arginine 83, glutamate 84, tyrosine 135, aspartate 244, and glutamine 245. Residues threonine 266 and glycine 309 each coordinate ADP. 4 residues coordinate ATP: threonine 266, glycine 309, glutamine 313, and glycine 410. Positions 410 and 414 each coordinate ADP.

This sequence belongs to the FGGY kinase family.

The enzyme catalyses glycerol + ATP = sn-glycerol 3-phosphate + ADP + H(+). It participates in polyol metabolism; glycerol degradation via glycerol kinase pathway; sn-glycerol 3-phosphate from glycerol: step 1/1. Inhibited by fructose 1,6-bisphosphate (FBP). Key enzyme in the regulation of glycerol uptake and metabolism. Catalyzes the phosphorylation of glycerol to yield sn-glycerol 3-phosphate. This chain is Glycerol kinase, found in Paraburkholderia xenovorans (strain LB400).